The following is a 337-amino-acid chain: Holliday junction branch migration complex subunit RuvB (337 aa).

The tract at residues 4–184 is large ATPase domain (RuvB-L); sequence ADRLIEPIAS…FGIVQRLEFY (181 aa). ATP contacts are provided by residues Ile-23, Arg-24, Gly-65, Lys-68, Thr-69, Thr-70, 131–133, Arg-174, Tyr-184, and Arg-221; that span reads EDY. Mg(2+) is bound at residue Thr-69. A small ATPAse domain (RuvB-S) region spans residues 185–255; it reads NVADLSTIVS…TAAAALDMLE (71 aa). The interval 258 to 337 is head domain (RuvB-H); the sequence is SEGFDIMDRK…FGITKDQTKD (80 aa). DNA contacts are provided by Arg-294, Arg-313, and Arg-318.

This sequence belongs to the RuvB family. In terms of assembly, homohexamer. Forms an RuvA(8)-RuvB(12)-Holliday junction (HJ) complex. HJ DNA is sandwiched between 2 RuvA tetramers; dsDNA enters through RuvA and exits via RuvB. An RuvB hexamer assembles on each DNA strand where it exits the tetramer. Each RuvB hexamer is contacted by two RuvA subunits (via domain III) on 2 adjacent RuvB subunits; this complex drives branch migration. In the full resolvosome a probable DNA-RuvA(4)-RuvB(12)-RuvC(2) complex forms which resolves the HJ.

Its subcellular location is the cytoplasm. It carries out the reaction ATP + H2O = ADP + phosphate + H(+). Functionally, the RuvA-RuvB-RuvC complex processes Holliday junction (HJ) DNA during genetic recombination and DNA repair, while the RuvA-RuvB complex plays an important role in the rescue of blocked DNA replication forks via replication fork reversal (RFR). RuvA specifically binds to HJ cruciform DNA, conferring on it an open structure. The RuvB hexamer acts as an ATP-dependent pump, pulling dsDNA into and through the RuvAB complex. RuvB forms 2 homohexamers on either side of HJ DNA bound by 1 or 2 RuvA tetramers; 4 subunits per hexamer contact DNA at a time. Coordinated motions by a converter formed by DNA-disengaged RuvB subunits stimulates ATP hydrolysis and nucleotide exchange. Immobilization of the converter enables RuvB to convert the ATP-contained energy into a lever motion, pulling 2 nucleotides of DNA out of the RuvA tetramer per ATP hydrolyzed, thus driving DNA branch migration. The RuvB motors rotate together with the DNA substrate, which together with the progressing nucleotide cycle form the mechanistic basis for DNA recombination by continuous HJ branch migration. Branch migration allows RuvC to scan DNA until it finds its consensus sequence, where it cleaves and resolves cruciform DNA. This Colwellia psychrerythraea (strain 34H / ATCC BAA-681) (Vibrio psychroerythus) protein is Holliday junction branch migration complex subunit RuvB.